The chain runs to 352 residues: Ion-translocating oxidoreductase complex subunit D (352 aa).

4 consecutive transmembrane segments (helical) span residues 20–40 (IMLL…WFFG), 42–62 (GTLF…AIVL), 69–91 (VASH…SIPP), and 123–143 (PAMI…TSWL). Position 187 is an FMN phosphoryl threonine (T187). 5 consecutive transmembrane segments (helical) span residues 215 to 235 (LAGV…VFLL), 242 to 262 (WHIP…GWLF), 267 to 287 (LASP…FFIL), 301 to 321 (LIFG…GGYP), and 322 to 342 (DGVA…DYYT).

This sequence belongs to the NqrB/RnfD family. The complex is composed of six subunits: RsxA, RsxB, RsxC, RsxD, RsxE and RsxG. Requires FMN as cofactor.

The protein resides in the cell inner membrane. Functionally, part of a membrane-bound complex that couples electron transfer with translocation of ions across the membrane. Required to maintain the reduced state of SoxR. The polypeptide is Ion-translocating oxidoreductase complex subunit D (Salmonella choleraesuis (strain SC-B67)).